Here is a 262-residue protein sequence, read N- to C-terminus: Type III pantothenate kinase (262 aa).

12-19 contacts ATP; the sequence is DIGNTSIA. Residues Tyr94 and 109–112 contribute to the substrate site; that span reads GSDV. Catalysis depends on Asp111, which acts as the Proton acceptor. Asp132 contributes to the K(+) binding site. Position 135 (Thr135) interacts with ATP. Residue Thr187 participates in substrate binding.

This sequence belongs to the type III pantothenate kinase family. As to quaternary structure, homodimer. The cofactor is NH4(+). Requires K(+) as cofactor.

The protein localises to the cytoplasm. It carries out the reaction (R)-pantothenate + ATP = (R)-4'-phosphopantothenate + ADP + H(+). Its pathway is cofactor biosynthesis; coenzyme A biosynthesis; CoA from (R)-pantothenate: step 1/5. Catalyzes the phosphorylation of pantothenate (Pan), the first step in CoA biosynthesis. The polypeptide is Type III pantothenate kinase (Borrelia garinii subsp. bavariensis (strain ATCC BAA-2496 / DSM 23469 / PBi) (Borreliella bavariensis)).